We begin with the raw amino-acid sequence, 563 residues long: GTPase Obg (563 aa).

The 167-residue stretch at Ser-2–Ile-168 folds into the Obg domain. An OBG-type G domain is found at Ala-169–His-349. GTP-binding positions include Gly-175–Ser-182, Phe-200–Val-204, Asp-221–Gly-224, Asn-301–Asp-304, and Ser-330–Ala-332. Mg(2+) is bound by residues Ser-182 and Thr-202. The 87-residue stretch at Asp-383 to Pro-469 folds into the OCT domain. Positions Arg-529–Glu-563 are disordered.

Belongs to the TRAFAC class OBG-HflX-like GTPase superfamily. OBG GTPase family. As to quaternary structure, monomer. Requires Mg(2+) as cofactor.

It localises to the cytoplasm. Functionally, an essential GTPase which binds GTP, GDP and possibly (p)ppGpp with moderate affinity, with high nucleotide exchange rates and a fairly low GTP hydrolysis rate. Plays a role in control of the cell cycle, stress response, ribosome biogenesis and in those bacteria that undergo differentiation, in morphogenesis control. The chain is GTPase Obg from Bifidobacterium longum (strain DJO10A).